The following is a 731-amino-acid chain: Putative beta-galactosidase (731 aa).

The first 29 residues, 1–29 (MLCGKENNVMKMMLVYVFVLITLISCVYG), serve as a signal peptide directing secretion. Glutamate 187 functions as the Proton donor in the catalytic mechanism. The active-site Nucleophile is glutamate 257.

The protein belongs to the glycosyl hydrolase 35 family. In terms of tissue distribution, senescing flower petals.

The catalysed reaction is Hydrolysis of terminal non-reducing beta-D-galactose residues in beta-D-galactosides.. This chain is Putative beta-galactosidase (CARSR12), found in Dianthus caryophyllus (Carnation).